The sequence spans 271 residues: Thiosulfate sulfurtransferase (271 aa).

2 Rhodanese domains span residues 21–129 (GAPE…ALDR) and 159–270 (GAAD…TPVE). Residue Cys230 is the Cysteine persulfide intermediate of the active site.

The protein resides in the cytoplasm. It catalyses the reaction thiosulfate + hydrogen cyanide = thiocyanate + sulfite + 2 H(+). Catalyzes the sulfur transfer reaction from thiosulfate to cyanide, thus converting cyanide to the less toxic thiocyanate. Contributes to P.aeruginosa survival under cyanogenic conditions, and thus provides the bacterium with a defense mechanism against endogenous cyanide toxicity. Is the main cytoplasmic rhodanese in P.aeruginosa, accounting for 90% of total rhodanese activity. The polypeptide is Thiosulfate sulfurtransferase (Pseudomonas aeruginosa (strain ATCC 15692 / DSM 22644 / CIP 104116 / JCM 14847 / LMG 12228 / 1C / PRS 101 / PAO1)).